A 298-amino-acid polypeptide reads, in one-letter code: Fluorinase (298 aa).

Residues D14, D19 to S21, Y75, S156, D209, N214, S268 to R269, and R276 to A278 contribute to the S-adenosyl-L-methionine site.

The protein belongs to the SAM hydrolase / SAM-dependent halogenase family.

It carries out the reaction fluoride + S-adenosyl-L-methionine = 5'-deoxy-5'-fluoroadenosine + L-methionine. Its function is as follows. Catalyzes the formation of a C-F bond by combining S-adenosyl-L-methionine (SAM) and fluoride to generate 5'-fluoro-5'-deoxyadenosine (5'-FDA) and L-methionine. This Actinoplanes sp. (strain N902-109) protein is Fluorinase.